Consider the following 2067-residue polypeptide: Non-reducing polyketide synthase PKS12 (2067 aa).

Residues 4–241 (FVFGDQSTRF…LPVPIYAPYH (238 aa)) form an N-terminal acylcarrier protein transacylase (SAT) domain region. The tract at residues 350 to 373 (NSMGPKASTSHSSAETQTESSSKN) is disordered. Residues 356 to 373 (ASTSHSSAETQTESSSKN) are compositionally biased toward polar residues. Residues 373-808 (NSKIAIVAMS…GGNSAVLLQD (436 aa)) enclose the Ketosynthase family 3 (KS3) domain. Active-site for beta-ketoacyl synthase activity residues include Cys545, His680, and His725. The segment at 912-1199 (FVFSGQGAQY…VVCSTFLKSS (288 aa)) is malonyl-CoA:ACP transacylase (MAT) domain. Ser1001 serves as the catalytic For acyl/malonyl transferase activity. An N-terminal hotdog fold region spans residues 1297-1433 (QKILQETSLD…CELRLEHPSQ (137 aa)). The PKS/mFAS DH domain maps to 1297-1606 (QKILQETSLD…FQGLPRRVLN (310 aa)). His1329 serves as the catalytic Proton acceptor; for dehydratase activity. The tract at residues 1329 to 1604 (HRVNGVKVCT…ITFQGLPRRV (276 aa)) is product template (PT) domain. The interval 1460 to 1606 (LDSMLATGMV…FQGLPRRVLN (147 aa)) is C-terminal hotdog fold. The active-site Proton donor; for dehydratase activity is the Asp1519. The interval 1619 to 1648 (APMGRRDVPPSRMDVPPVRSGEGPPTSAPT) is disordered. The 79-residue stretch at 1660-1738 (TSMDSRLRPL…SFKLFLGLVD (79 aa)) folds into the Carrier domain. Ser1698 carries the post-translational modification O-(pantetheine 4'-phosphoryl)serine. The segment at 1742 to 1779 (KSSSGSDGSGRSSPAPGIESGATTPPMSEEDQDKIVSS) is disordered. Over residues 1743 to 1754 (SSSGSDGSGRSS) the composition is skewed to low complexity. The claisen cyclase domain stretch occupies residues 1781-2065 (SLHQFQASST…YVSAFLARAL (285 aa)). Ser1875 acts as the For Claisen cyclase activity in catalysis.

The catalysed reaction is 6 malonyl-CoA + acetyl-CoA + 6 H(+) = naphtopyrone YWA1 + 6 CO2 + 7 CoA + H2O. The protein operates within pigment biosynthesis. Its function is as follows. Non-reducing polyketide synthase; part of the gene cluster that mediates the biosynthesis of aurofusarin, a red mycelium pigment which is acting as a mycotoxin. The first step is performed by the polyketide synthase which condenses one acetyl-CoA and 6 malonyl-CoA units to form the first intermediate, the cyclic heptaketide and yellow pigment YWA1. The C2 hydroxyl group in the pyrone ring of YWA1 is probably formed during ring closure by an aldol-type cyclization reaction. The dehydratase aurZ then acts as the first tailoring enzyme in the aurofusarin biosynthetic pathway by converting YWA1 to nor-rubrofusarin. Nor-rubrofusarin is then methylated to rubrofusarin by the O-methyltransferase aurJ. Rubrofusarin is then transported across the plasma membrane by the rubrofusarin-specific pump aurT for further enzymatic processing by the extracellular complex composed of GIP1, aurF, aurO and aurS to yield aurofusarin. The protein is Non-reducing polyketide synthase PKS12 of Gibberella zeae (strain ATCC MYA-4620 / CBS 123657 / FGSC 9075 / NRRL 31084 / PH-1) (Wheat head blight fungus).